A 776-amino-acid polypeptide reads, in one-letter code: 3-isopropylmalate dehydratase (776 aa).

The [4Fe-4S] cluster site is built by C357, C418, and C421. Residues 482-493 are compositionally biased toward basic and acidic residues; that stretch reads SAPKVEVRHDTD. Disordered stretches follow at residues 482–518 and 525–544; these read SAPK…SDVA and DIPV…SADA. Residues 527–538 are compositionally biased toward polar residues; that stretch reads PVSNSSTQSPGS.

The protein belongs to the aconitase/IPM isomerase family. In terms of assembly, monomer. The cofactor is [4Fe-4S] cluster.

The enzyme catalyses (2R,3S)-3-isopropylmalate = (2S)-2-isopropylmalate. The protein operates within amino-acid biosynthesis; L-leucine biosynthesis; L-leucine from 3-methyl-2-oxobutanoate: step 2/4. In terms of biological role, catalyzes the isomerization between 2-isopropylmalate and 3-isopropylmalate, via the formation of 2-isopropylmaleate. This chain is 3-isopropylmalate dehydratase (LEU1), found in Eremothecium gossypii (strain ATCC 10895 / CBS 109.51 / FGSC 9923 / NRRL Y-1056) (Yeast).